The following is a 393-amino-acid chain: Mitogen-activated protein kinase homolog NTF4 (393 aa).

A disordered region spans residues Met1–Asn32. The region spanning Lys60–Leu345 is the Protein kinase domain. Residues Ile66–Val74 and Lys89 each bind ATP. Catalysis depends on Asp186, which acts as the Proton acceptor. At Thr218 the chain carries Phosphothreonine. The TXY motif lies at Thr218–Tyr220. The residue at position 220 (Tyr220) is a Phosphotyrosine.

The protein belongs to the protein kinase superfamily. CMGC Ser/Thr protein kinase family. MAP kinase subfamily. Mg(2+) serves as cofactor. Dually phosphorylated on Thr-218 and Tyr-220, which activates the enzyme. Very low autophosphorylation, although dramatically increased when Mn(2+) is added to the reaction instead of Mg(2+).

The catalysed reaction is L-seryl-[protein] + ATP = O-phospho-L-seryl-[protein] + ADP + H(+). It catalyses the reaction L-threonyl-[protein] + ATP = O-phospho-L-threonyl-[protein] + ADP + H(+). Activated by tyrosine and threonine phosphorylation. This chain is Mitogen-activated protein kinase homolog NTF4 (NTF4), found in Nicotiana tabacum (Common tobacco).